A 184-amino-acid polypeptide reads, in one-letter code: Photosystem I assembly protein Ycf4 (184 aa).

The next 2 membrane-spanning stretches (helical) occupy residues 19 to 39 and 57 to 77; these read ISNF…LLVG and IVFF…LFIS.

The protein belongs to the Ycf4 family.

The protein localises to the plastid. Its subcellular location is the chloroplast thylakoid membrane. Seems to be required for the assembly of the photosystem I complex. This is Photosystem I assembly protein Ycf4 from Atropa belladonna (Belladonna).